Reading from the N-terminus, the 901-residue chain is Protein translocase subunit SecA (901 aa).

Residues Gln87, 105 to 109 (GEGKT), and Asp512 contribute to the ATP site. The interval 859 to 901 (HQDDDSAAAAALAAQTGERKVGRNDPCPCGSGKKYKQCHGRLQ) is disordered. Residues Cys885, Cys887, Cys896, and His897 each coordinate Zn(2+). The segment covering 891 to 901 (KKYKQCHGRLQ) has biased composition (basic residues).

It belongs to the SecA family. In terms of assembly, monomer and homodimer. Part of the essential Sec protein translocation apparatus which comprises SecA, SecYEG and auxiliary proteins SecDF-YajC and YidC. Zn(2+) is required as a cofactor.

The protein resides in the cell inner membrane. The protein localises to the cytoplasm. It carries out the reaction ATP + H2O + cellular proteinSide 1 = ADP + phosphate + cellular proteinSide 2.. Functionally, part of the Sec protein translocase complex. Interacts with the SecYEG preprotein conducting channel. Has a central role in coupling the hydrolysis of ATP to the transfer of proteins into and across the cell membrane, serving both as a receptor for the preprotein-SecB complex and as an ATP-driven molecular motor driving the stepwise translocation of polypeptide chains across the membrane. The sequence is that of Protein translocase subunit SecA from Escherichia coli O127:H6 (strain E2348/69 / EPEC).